Here is a 306-residue protein sequence, read N- to C-terminus: HORMA domain-containing protein 2 (306 aa).

The region spanning 29-232 is the HORMA domain; sequence HESLVVVKKL…SGFHSMKVKV (204 aa). Serine 271 is subject to Phosphoserine.

As to quaternary structure, interacts with HORMAD1. In terms of processing, phosphorylated in a SPO11-dependent manner. As to expression, specifically expressed in meiotic germ cells.

Its subcellular location is the nucleus. It localises to the chromosome. Functionally, essential for synapsis surveillance during meiotic prophase via the recruitment of ATR activity. Plays a key role in the male mid-pachytene checkpoint and the female meiotic prophase checkpoint: required for efficient build-up of ATR activity on unsynapsed chromosome regions, a process believed to form the basis of meiotic silencing of unsynapsed chromatin (MSUC) and meiotic prophase quality control in both sexes. Required for the DNA double-strand break-independent, BRCA1-dependent activation of ATR on the sex chromosomes that is essential for normal sex body formation. The chain is HORMA domain-containing protein 2 (Hormad2) from Mus musculus (Mouse).